Reading from the N-terminus, the 46-residue chain is Sperm protamine P1 (46 aa).

The protein belongs to the protamine P1 family. As to expression, testis.

Its subcellular location is the nucleus. The protein resides in the chromosome. In terms of biological role, protamines substitute for histones in the chromatin of sperm during the haploid phase of spermatogenesis. They compact sperm DNA into a highly condensed, stable and inactive complex. This chain is Sperm protamine P1 (PRM1), found in Hypsugo savii (Savi's pipistrelle).